Reading from the N-terminus, the 766-residue chain is AMP deaminase 3 (766 aa).

Residues S85 and S107 each carry the phosphoserine modification. The segment at 89–114 (QMPTQQDWKGPPTASPAMSPATPLVP) is disordered. Over residues 99-110 (PPTASPAMSPAT) the composition is skewed to low complexity. Residues H316 and H318 each contribute to the Zn(2+) site. Substrate contacts are provided by residues H318 and 387–392 (KFNSKY). A Zn(2+)-binding site is contributed by H585. E588 provides a ligand contact to substrate. Catalysis depends on H607, which acts as the Proton acceptor. D662 contributes to the Zn(2+) binding site. 663–666 (DPMQ) contacts substrate.

This sequence belongs to the metallo-dependent hydrolases superfamily. Adenosine and AMP deaminases family. As to quaternary structure, homotetramer. It depends on Zn(2+) as a cofactor. As to expression, found in heart, lung brain, spleen, kidney and to a lesser extent in liver.

The enzyme catalyses AMP + H2O + H(+) = IMP + NH4(+). It functions in the pathway purine metabolism; IMP biosynthesis via salvage pathway; IMP from AMP: step 1/1. AMP deaminase plays a critical role in energy metabolism. This Mus musculus (Mouse) protein is AMP deaminase 3.